The chain runs to 471 residues: 3-isopropylmalate dehydratase large subunit (471 aa).

3 residues coordinate [4Fe-4S] cluster: Cys-349, Cys-409, and Cys-412.

The protein belongs to the aconitase/IPM isomerase family. LeuC type 1 subfamily. In terms of assembly, heterodimer of LeuC and LeuD. [4Fe-4S] cluster is required as a cofactor.

It catalyses the reaction (2R,3S)-3-isopropylmalate = (2S)-2-isopropylmalate. Its pathway is amino-acid biosynthesis; L-leucine biosynthesis; L-leucine from 3-methyl-2-oxobutanoate: step 2/4. Catalyzes the isomerization between 2-isopropylmalate and 3-isopropylmalate, via the formation of 2-isopropylmaleate. The protein is 3-isopropylmalate dehydratase large subunit of Aliivibrio fischeri (strain MJ11) (Vibrio fischeri).